The primary structure comprises 244 residues: 1-(5-phosphoribosyl)-5-[(5-phosphoribosylamino)methylideneamino] imidazole-4-carboxamide isomerase (244 aa).

D10 acts as the Proton acceptor in catalysis. The active-site Proton donor is the D132.

This sequence belongs to the HisA/HisF family.

It localises to the cytoplasm. It catalyses the reaction 1-(5-phospho-beta-D-ribosyl)-5-[(5-phospho-beta-D-ribosylamino)methylideneamino]imidazole-4-carboxamide = 5-[(5-phospho-1-deoxy-D-ribulos-1-ylimino)methylamino]-1-(5-phospho-beta-D-ribosyl)imidazole-4-carboxamide. Its pathway is amino-acid biosynthesis; L-histidine biosynthesis; L-histidine from 5-phospho-alpha-D-ribose 1-diphosphate: step 4/9. This chain is 1-(5-phosphoribosyl)-5-[(5-phosphoribosylamino)methylideneamino] imidazole-4-carboxamide isomerase, found in Xanthomonas oryzae pv. oryzae (strain MAFF 311018).